We begin with the raw amino-acid sequence, 303 residues long: Deoxyhypusine hydroxylase (303 aa).

2 HEAT-like PBS-type repeats span residues L56–D82 and V89–D115. The Fe cation site is built by H58, H91, and E92. Residues D139–K158 form a disordered region. 3 HEAT-like PBS-type repeats span residues H176–I202, F207–R233, and V240–D266. Fe cation-binding residues include H209, H242, and E243.

Belongs to the deoxyhypusine hydroxylase family. Fe(2+) is required as a cofactor.

The enzyme catalyses [eIF5A protein]-deoxyhypusine + AH2 + O2 = [eIF5A protein]-hypusine + A + H2O. It participates in protein modification; eIF5A hypusination. Its function is as follows. Catalyzes the hydroxylation of the N(6)-(4-aminobutyl)-L-lysine intermediate produced by deoxyhypusine synthase/DHPS on a critical lysine of the eukaryotic translation initiation factor 5A/eIF-5A. This is the second step of the post-translational modification of that lysine into an unusual amino acid residue named hypusine. Hypusination is unique to mature eIF-5A factor and is essential for its function. The chain is Deoxyhypusine hydroxylase (dohh) from Xenopus laevis (African clawed frog).